A 315-amino-acid chain; its full sequence is Diacylglycerol kinase (315 aa).

The DAGKc domain occupies 1-132 (MRKRARIIYN…VDIGKMNNRY (132 aa)). ATP contacts are provided by residues 10 to 14 (NPTSG), Thr41, 67 to 73 (GDGTLNE), and Thr94. Mg(2+)-binding residues include Lys213, Asp216, and Tyr218. Glu273 acts as the Proton acceptor in catalysis.

Belongs to the diacylglycerol/lipid kinase family. Homodimer. Requires Mg(2+) as cofactor.

It catalyses the reaction a 1,2-diacyl-sn-glycerol + ATP = a 1,2-diacyl-sn-glycero-3-phosphate + ADP + H(+). In terms of biological role, catalyzes the phosphorylation of diacylglycerol (DAG) into phosphatidic acid. Is a key enzyme involved in the production of lipoteichoic acid by reintroducing DAG formed from the breakdown of membrane phospholipids into the phosphatidylglycerol biosynthetic pathway. This Staphylococcus aureus (strain USA300 / TCH1516) protein is Diacylglycerol kinase (dagK).